We begin with the raw amino-acid sequence, 378 residues long: DNA replication and repair protein RecF (378 aa).

30–37 provides a ligand contact to ATP; the sequence is GRNGQGKT.

The protein belongs to the RecF family.

The protein localises to the cytoplasm. Functionally, the RecF protein is involved in DNA metabolism; it is required for DNA replication and normal SOS inducibility. RecF binds preferentially to single-stranded, linear DNA. It also seems to bind ATP. The polypeptide is DNA replication and repair protein RecF (Frankia alni (strain DSM 45986 / CECT 9034 / ACN14a)).